The sequence spans 502 residues: UPF0371 protein CLM_0396 (502 aa).

Belongs to the UPF0371 family.

This Clostridium botulinum (strain Kyoto / Type A2) protein is UPF0371 protein CLM_0396.